A 486-amino-acid chain; its full sequence is CUGBP Elav-like family member 5 (486 aa).

Basic and acidic residues predominate over residues methionine 1 to arginine 11. The interval methionine 1–aspartate 39 is disordered. Low complexity predominate over residues glutamine 12–arginine 24. 3 RRM domains span residues isoleucine 47–serine 128, arginine 135–threonine 215, and cysteine 401–proline 479.

The protein belongs to the CELF/BRUNOL family.

The protein localises to the nucleus. It is found in the cytoplasm. Functionally, RNA-binding protein that may be implicated in the regulation of pre-mRNA alternative splicing. This Xenopus tropicalis (Western clawed frog) protein is CUGBP Elav-like family member 5 (celf5).